The sequence spans 330 residues: tRNA uridine(34) hydroxylase (330 aa).

Residues 123–217 (SDPETILVDT…YLEEVPKEES (95 aa)) enclose the Rhodanese domain. Cys-177 functions as the Cysteine persulfide intermediate in the catalytic mechanism. Positions 310 to 330 (LNKQQKQQAKEIARKKAKSEI) are disordered. Positions 317–330 (QAKEIARKKAKSEI) are enriched in basic and acidic residues.

The protein belongs to the TrhO family.

The enzyme catalyses uridine(34) in tRNA + AH2 + O2 = 5-hydroxyuridine(34) in tRNA + A + H2O. Its function is as follows. Catalyzes oxygen-dependent 5-hydroxyuridine (ho5U) modification at position 34 in tRNAs. The sequence is that of tRNA uridine(34) hydroxylase from Francisella philomiragia subsp. philomiragia (strain ATCC 25017 / CCUG 19701 / FSC 153 / O#319-036).